We begin with the raw amino-acid sequence, 460 residues long: ATP synthase subunit beta (460 aa).

150–157 (GGAGVGKT) is a binding site for ATP.

It belongs to the ATPase alpha/beta chains family. As to quaternary structure, F-type ATPases have 2 components, CF(1) - the catalytic core - and CF(0) - the membrane proton channel. CF(1) has five subunits: alpha(3), beta(3), gamma(1), delta(1), epsilon(1). CF(0) has three main subunits: a(1), b(2) and c(9-12). The alpha and beta chains form an alternating ring which encloses part of the gamma chain. CF(1) is attached to CF(0) by a central stalk formed by the gamma and epsilon chains, while a peripheral stalk is formed by the delta and b chains.

It is found in the cell inner membrane. It carries out the reaction ATP + H2O + 4 H(+)(in) = ADP + phosphate + 5 H(+)(out). Produces ATP from ADP in the presence of a proton gradient across the membrane. The catalytic sites are hosted primarily by the beta subunits. The sequence is that of ATP synthase subunit beta from Yersinia pestis bv. Antiqua (strain Angola).